The following is a 274-amino-acid chain: Putative ankyrin repeat protein R597 (274 aa).

4 ANK repeats span residues 78–112 (VGLP…NNND), 114–144 (PISE…SLKI), 146–174 (SRYH…DIQG), and 176–205 (NLSY…NIND).

This Acanthamoeba polyphaga mimivirus (APMV) protein is Putative ankyrin repeat protein R597.